The chain runs to 237 residues: Listeriolysin regulatory protein (237 aa).

An HTH crp-type domain is found at 137-212; it reads NGKLGSICGQ…NSCFYVQNLD (76 aa).

Positively regulates expression of listeriolysin, of 1-phosphadidylinositol phosphodiesterase (PI-PLC) and other virulence factors. The sequence is that of Listeriolysin regulatory protein (prfA) from Listeria monocytogenes serovar 1/2a (strain ATCC BAA-679 / EGD-e).